We begin with the raw amino-acid sequence, 632 residues long: Chaperone protein DnaK (632 aa).

Phosphothreonine; by autocatalysis is present on T198. The disordered stretch occupies residues 524–557 (RREAVDAKNHADSLVHSTEKALAEHGSKIEDSER).

This sequence belongs to the heat shock protein 70 family.

Functionally, acts as a chaperone. The sequence is that of Chaperone protein DnaK from Nitrobacter hamburgensis (strain DSM 10229 / NCIMB 13809 / X14).